Reading from the N-terminus, the 1007-residue chain is Probable beta-galactosidase A (1007 aa).

The N-terminal stretch at 1–18 is a signal peptide; that stretch reads MKLSSACAIALLAAQAAG. Substrate-binding residues include Y96, N140, A141, and E142. Residue N156 is glycosylated (N-linked (GlcNAc...) asparagine). N199 lines the substrate pocket. Catalysis depends on E200, which acts as the Proton donor. A disulfide bond links C205 and C206. Residue Y260 participates in substrate binding. Residues C266 and C315 are joined by a disulfide bond. E298 functions as the Nucleophile in the catalytic mechanism. Y364 contacts substrate. N-linked (GlcNAc...) asparagine glycosylation is found at N373, N402, N422, N478, N522, N622, N739, N760, N777, and N805. The interval 862 to 881 is disordered; that stretch reads RQGFHQPEPPSQDWKSSSPL. An N-linked (GlcNAc...) asparagine glycan is attached at N914.

Belongs to the glycosyl hydrolase 35 family.

The protein localises to the secreted. It catalyses the reaction Hydrolysis of terminal non-reducing beta-D-galactose residues in beta-D-galactosides.. Functionally, cleaves beta-linked terminal galactosyl residues from gangliosides, glycoproteins, and glycosaminoglycans. In Aspergillus phoenicis (Aspergillus saitoi), this protein is Probable beta-galactosidase A (lacA).